Consider the following 1241-residue polypeptide: MVHPVQVGKRTRMSFGKVKDVTEMPNLIEVQLDSYQWFLREGLHEVFDDINPITNFTGNLVLEFVDYKLDMDNIKYSVEECKERDATYAAPLKVSVRLQNNETGEIKEQEVFMGDFPLMTDQGTFIINGAERVIVSQLVRSPGVYYNYSIDKTGKKLYSATVIPNRGAWLEYETDSNDIIYVRIDKTRKLPITILARAMGFGSDQELLDFFGEDERFRASIEKDNTKTREEGLLEIYKRLRPGEPPTVDSAISLIDSLFFDAKRYDLSRVGRYKFNKKLALNLRIANQIAAMDVINPSTGEIMVEKGQKISRLLSEDIQNAGIKSVDILVDDKLVRVISNNFVDITKQVPFDVSDLQIKELVHYPTLKEILDNYSDEATIKEEIKKNLSRLIPKHIIKDDIFATISYELGLPYGIGYVDDIDHLGNRRLRSVGELLQNQFRIGLSRMERVVKERMTIQDQESITPQMLINIRPVAAAIKEFFGSSQLSQFMDQTNPLSELTHKRRLSALGPGGLSRERAGFEVRDVHHSHYGRMCPIETPEGPNIGLINSLATFARVNEYGFIETPYRIIDKENARATEEIRYFTADEEDQCLIAQAKEPLDENGYFVDKKVTVRYLEDVLVVPATDVDLMDVSARQIVSVATAMIPFLENDDASRALMGSNMQRQAVPLLKPQAPIVGTGIEFKAAVDSGVLPKAKNAGVVTFVSANEIRVKRDSDGGTDNYRLLKFKRSNQSSCINQRPIVNKGEIVFKNQVLADGPSTDLGEIALGKNIRMGFITWEGYNYEDAMLISEELVREDVFTSMHIEEYECEARDTKLGPEEITRDIPNVSEDALKDIDDRGIIRIGAEVRSGDILVGKVTPKGETELTAEERLLRAIFGEKAREVRDTSLRVPHGEAGIIVDIKVFTRENGDELNPGVNELVRCYIVQKRKISVGDKMAGRHGNKGVISRILPEEDMPFLPDGRPLQICLNPLGVPSRMNIGQVLEVHLGWAASKLGWHISTPVFDGATENEIEACLEKAGYNANGKTVLYDGRTGEPFDNPVTVGIMYILKLAHLVDDKIHARSTGPYSLVTQQPLGGKAQFGGQRFGEMEVWALEAYGAAHTLQEILTVKSDDVVGRVKTYEAIVKGENIPEPGVPESFKVLIKELQALCLDVKVLNENHQEVSLKEYTDDEIADLEVNIEGSEESTPVVPVVESNIEEVEVEAEDGYREDLDEIEYDENFEIETLETDLELDDFNDEH.

The protein belongs to the RNA polymerase beta chain family. In terms of assembly, the RNAP catalytic core consists of 2 alpha, 1 beta, 1 beta' and 1 omega subunit. When a sigma factor is associated with the core the holoenzyme is formed, which can initiate transcription.

It catalyses the reaction RNA(n) + a ribonucleoside 5'-triphosphate = RNA(n+1) + diphosphate. Its function is as follows. DNA-dependent RNA polymerase catalyzes the transcription of DNA into RNA using the four ribonucleoside triphosphates as substrates. This chain is DNA-directed RNA polymerase subunit beta, found in Clostridium botulinum (strain Alaska E43 / Type E3).